A 360-amino-acid chain; its full sequence is MKASLLNKLDNLSDRFEELTALLGDAEVISKQTQFRAYSKEYAEIEPVIATFRELRKVQSDLEGAQALLKESDPDLREMAEEEVAQAKEALTTLEDKLQRMLLPKDPNDGRNVYLEVRAGTGGDEAAIFSGDLFRMYSRYAEKQGWRVEVLSANEGEHGGFKEVIARVEGDNVYAKLKFESGAHRVQRVPETESQGRIHTSACTVAVLPEPDEQAAIEINPADLRVDTYRSSGAGGQHVNTTDSAIRITHIPTGTVVECQEERSQHKNRAKAMAWLAAKLQDQQEAAAHKEISETRKLLVGSGDRSERIRTYNFPQGRVTDHRINLTLYSLSEVMAGGVEAVIEPLLAEYQADQLAALGD.

Glutamine 237 carries the post-translational modification N5-methylglutamine.

It belongs to the prokaryotic/mitochondrial release factor family. In terms of processing, methylated by PrmC. Methylation increases the termination efficiency of RF1.

It localises to the cytoplasm. Functionally, peptide chain release factor 1 directs the termination of translation in response to the peptide chain termination codons UAG and UAA. This chain is Peptide chain release factor 1, found in Ectopseudomonas mendocina (strain ymp) (Pseudomonas mendocina).